The sequence spans 260 residues: Indole-3-glycerol phosphate synthase (260 aa).

It belongs to the TrpC family.

The catalysed reaction is 1-(2-carboxyphenylamino)-1-deoxy-D-ribulose 5-phosphate + H(+) = (1S,2R)-1-C-(indol-3-yl)glycerol 3-phosphate + CO2 + H2O. The protein operates within amino-acid biosynthesis; L-tryptophan biosynthesis; L-tryptophan from chorismate: step 4/5. This is Indole-3-glycerol phosphate synthase from Neisseria meningitidis serogroup B (strain ATCC BAA-335 / MC58).